We begin with the raw amino-acid sequence, 414 residues long: Protein DNA-DAMAGE INDUCIBLE 1 (414 aa).

Positions 1–76 (MRITVMTAGE…LMMMVSNASS (76 aa)) constitute a Ubiquitin-like domain. The Peptidase A2 domain occupies 213–292 (LKAFVDSGAQ…NMEFLFGLDM (80 aa)). D218 is a catalytic residue. The disordered stretch occupies residues 332-374 (ERVPNDASSSGATVPSGFTEKKNNTVANPTSQQPKRQNTSEGP). Polar residues predominate over residues 355-372 (NTVANPTSQQPKRQNTSE). Residues 374-414 (PEFEAKIAKLVELGFSRDSVIQALKLFEGNEEQAAGFLFGG) form the UBA domain.

It belongs to the DDI1 family. Homodimer.

The protein localises to the cytoplasm. It is found in the cytosol. Receptor of ubiquitinated protein targeted to ubiquitin/proteasome-mediated proteolysis (UPP). Relatively weak affinity for both 'Lys-48'- and 'Lys-63'-linked ubiquitin chains with a slight preference for 'Lys-48-'linked chains of three or more ubiquitin units. This Arabidopsis thaliana (Mouse-ear cress) protein is Protein DNA-DAMAGE INDUCIBLE 1.